Here is a 146-residue protein sequence, read N- to C-terminus: MALLKKINTQVNRIMKNSSLVQNICFDRVPLFIPRLSLTVKYCLAVKLLIYLLYCWYIYSEVPSVSSKFRSFTFGCVVVYHNKFFPRFIRTHSINSIRTFSKFQVIILFSIEKVTRSESKNHSYSKTDISDLHQGYNNPPSRFISR.

The helical transmembrane segment at 38 to 60 (LTVKYCLAVKLLIYLLYCWYIYS) threads the bilayer.

Belongs to the UPF0742 family.

It is found in the cytoplasm. Its subcellular location is the nucleus membrane. The sequence is that of UPF0742 protein PB2B2.17c from Schizosaccharomyces pombe (strain 972 / ATCC 24843) (Fission yeast).